Here is a 423-residue protein sequence, read N- to C-terminus: Glucose-1-phosphate adenylyltransferase (423 aa).

Residues tyrosine 107, glycine 172, 187–188, and serine 205 contribute to the alpha-D-glucose 1-phosphate site; that span reads EK.

It belongs to the bacterial/plant glucose-1-phosphate adenylyltransferase family. As to quaternary structure, homotetramer.

The enzyme catalyses alpha-D-glucose 1-phosphate + ATP + H(+) = ADP-alpha-D-glucose + diphosphate. The protein operates within glycan biosynthesis; glycogen biosynthesis. In terms of biological role, involved in the biosynthesis of ADP-glucose, a building block required for the elongation reactions to produce glycogen. Catalyzes the reaction between ATP and alpha-D-glucose 1-phosphate (G1P) to produce pyrophosphate and ADP-Glc. The polypeptide is Glucose-1-phosphate adenylyltransferase (Cereibacter sphaeroides (strain ATCC 17025 / ATH 2.4.3) (Rhodobacter sphaeroides)).